The following is a 269-amino-acid chain: 3-methyl-2-oxobutanoate hydroxymethyltransferase (269 aa).

Positions 46 and 85 each coordinate Mg(2+). 3-methyl-2-oxobutanoate is bound by residues 46-47 (DS), aspartate 85, and lysine 114. Glutamate 116 lines the Mg(2+) pocket. Catalysis depends on glutamate 183, which acts as the Proton acceptor.

The protein belongs to the PanB family. As to quaternary structure, homodecamer; pentamer of dimers. Requires Mg(2+) as cofactor.

The protein resides in the cytoplasm. It carries out the reaction 3-methyl-2-oxobutanoate + (6R)-5,10-methylene-5,6,7,8-tetrahydrofolate + H2O = 2-dehydropantoate + (6S)-5,6,7,8-tetrahydrofolate. It functions in the pathway cofactor biosynthesis; (R)-pantothenate biosynthesis; (R)-pantoate from 3-methyl-2-oxobutanoate: step 1/2. Catalyzes the reversible reaction in which hydroxymethyl group from 5,10-methylenetetrahydrofolate is transferred onto alpha-ketoisovalerate to form ketopantoate. In Methylococcus capsulatus (strain ATCC 33009 / NCIMB 11132 / Bath), this protein is 3-methyl-2-oxobutanoate hydroxymethyltransferase.